A 143-amino-acid polypeptide reads, in one-letter code: Large ribosomal subunit protein uL11 (143 aa).

It belongs to the universal ribosomal protein uL11 family. As to quaternary structure, part of the ribosomal stalk of the 50S ribosomal subunit. Interacts with L10 and the large rRNA to form the base of the stalk. L10 forms an elongated spine to which L12 dimers bind in a sequential fashion forming a multimeric L10(L12)X complex. Post-translationally, one or more lysine residues are methylated.

In terms of biological role, forms part of the ribosomal stalk which helps the ribosome interact with GTP-bound translation factors. This chain is Large ribosomal subunit protein uL11, found in Bifidobacterium longum subsp. infantis (strain ATCC 15697 / DSM 20088 / JCM 1222 / NCTC 11817 / S12).